The following is a 293-amino-acid chain: tRNA pseudouridine synthase B (293 aa).

Asp40 serves as the catalytic Nucleophile.

The protein belongs to the pseudouridine synthase TruB family. Type 1 subfamily.

It carries out the reaction uridine(55) in tRNA = pseudouridine(55) in tRNA. Responsible for synthesis of pseudouridine from uracil-55 in the psi GC loop of transfer RNAs. This is tRNA pseudouridine synthase B from Rickettsia akari (strain Hartford).